The primary structure comprises 248 residues: Proteasome subunit alpha (248 aa).

This sequence belongs to the peptidase T1A family. The 20S proteasome core is composed of 14 alpha and 14 beta subunits that assemble into four stacked heptameric rings, resulting in a barrel-shaped structure. The two inner rings, each composed of seven catalytic beta subunits, are sandwiched by two outer rings, each composed of seven alpha subunits. The catalytic chamber with the active sites is on the inside of the barrel. Has a gated structure, the ends of the cylinder being occluded by the N-termini of the alpha-subunits. Is capped at one or both ends by the proteasome regulatory ATPase, PAN.

Its subcellular location is the cytoplasm. Its activity is regulated as follows. The formation of the proteasomal ATPase PAN-20S proteasome complex, via the docking of the C-termini of PAN into the intersubunit pockets in the alpha-rings, triggers opening of the gate for substrate entry. Interconversion between the open-gate and close-gate conformations leads to a dynamic regulation of the 20S proteasome proteolysis activity. Component of the proteasome core, a large protease complex with broad specificity involved in protein degradation. The polypeptide is Proteasome subunit alpha (Methanothermobacter thermautotrophicus (strain ATCC 29096 / DSM 1053 / JCM 10044 / NBRC 100330 / Delta H) (Methanobacterium thermoautotrophicum)).